We begin with the raw amino-acid sequence, 258 residues long: Granzyme A (258 aa).

Residues 1-26 form the signal peptide; that stretch reads MNIPFPFSFPPAICLLLIPGVFPVSC. A propeptide spans 27-28 (activation peptide); that stretch reads EG. The Peptidase S1 domain maps to 29 to 255; it reads IIGGNEVAPH…HLNWIKKTIA (227 aa). C52 and C68 form a disulfide bridge. Active-site charge relay system residues include H67 and D112. 3 disulfide bridges follow: C146–C217, C178–C196, and C207–C230. N169 carries an N-linked (GlcNAc...) asparagine glycan. S211 serves as the catalytic Charge relay system.

The protein belongs to the peptidase S1 family. Granzyme subfamily. As to quaternary structure, homodimer; disulfide-linked. Interacts with APEX1.

Its subcellular location is the secreted. It localises to the cytoplasmic granule. The catalysed reaction is Hydrolysis of proteins, including fibronectin, type IV collagen and nucleolin. Preferential cleavage: -Arg-|-Xaa-, -Lys-|-Xaa- &gt;&gt; -Phe-|-Xaa- in small molecule substrates.. Functionally, abundant protease in the cytosolic granules of cytotoxic T-cells and NK-cells which activates caspase-independent pyroptosis when delivered into the target cell through the immunological synapse. It cleaves after Lys or Arg. Cleaves APEX1 after 'Lys-31' and destroys its oxidative repair activity. Cleaves the nucleosome assembly protein SET after 'Lys-189', which disrupts its nucleosome assembly activity and allows the SET complex to translocate into the nucleus to nick and degrade the DNA. The protein is Granzyme A (GZMA) of Bos taurus (Bovine).